The sequence spans 485 residues: Pre-glycoprotein polyprotein GP complex (485 aa).

Gly2 carries the N-myristoyl glycine; by host lipid modification. Topologically, residues 2-17 are extracellular; it reads GQLISFFGEIPTILQE. Residues 18 to 33 traverse the membrane as a helical segment; sequence ALNIALIAVSIIATIK. The Cytoplasmic portion of the chain corresponds to 34 to 58; it reads GVVNVWKSGLIQLLMFVMLAGRSCS. A Zn(2+)-binding site is contributed by Cys57. Topologically, residues 59–424 are extracellular; sequence VQIGHHLELE…QGRTPLSLVD (366 aa). 4 disulfide bridges follow: Cys85–Cys225, Cys271–Cys284, Cys293–Cys302, and Cys356–Cys377. N-linked (GlcNAc...) asparagine; by host glycans are attached at residues Asn88, Asn128, Asn179, and Asn218. Residues Asn357, Asn365, Asn382, and Asn387 are each glycosylated (N-linked (GlcNAc...) asparagine; by host). A helical membrane pass occupies residues 425–445; that stretch reads VCFWSTLFYTASIFLHLIRIP. At 446–485 the chain is on the cytoplasmic side; it reads THRHIVGEGCPKPHRLRADSTCACGLYKQKRRPLKWVRSN. The Zn(2+) site is built by His447, His449, Cys455, His459, Cys467, and Cys469.

It belongs to the arenaviridae GPC protein family. As to quaternary structure, interacts with glycoprotein G2. Part of the GP complex (GP-C) together with glycoprotein G1 and glycoprotein G2. The GP-complex interacts with protein Z, which interacts with ribonucleocapsid; these interactions may induce virion budding. In terms of assembly, homotrimer; disulfide-linked. In pre-fusion state, G1 homotrimers bind G2 homotrimers via ionic interactions. Part of the GP complex (GP-C) together with glycoprotein G2 and the stable signal peptide. The GP-complex interacts with protein Z, which interacts with ribonucleocapsid; these interactions may induce virion budding. Homotrimer. Interacts with the stable signal peptide. In pre-fusion state, G2 homotrimers bind G1 homotrimers via ionic interactions. Part of the GP complex (GP-C) together with glycoprotein G1 and the stable signal peptide. Acidification in the endosome triggers rearrangements, which ultimately leads to a 6 helix bundle formed by the two heptad repeat domains (HR1 and HR2) in post-fusion state. The GP-complex interacts with protein Z, which interacts with ribonucleocapsid; these interactions may induce virion budding. In terms of processing, specific enzymatic cleavages in vivo yield mature proteins. GP-C polyprotein is cleaved in the endoplasmic reticulum by the host protease MBTPS1. Only cleaved glycoprotein is incorporated into virions. The SSP remains stably associated with the GP complex following cleavage by signal peptidase and plays crucial roles in the trafficking of GP through the secretory pathway. Post-translationally, myristoylation is necessary for GP2-mediated fusion activity.

It localises to the virion membrane. The protein localises to the host endoplasmic reticulum membrane. The protein resides in the host Golgi apparatus membrane. Its subcellular location is the host cell membrane. Functions as a cleaved signal peptide that is retained as the third component of the GP complex (GP-C). Helps to stabilize the spike complex in its native conformation. The SSP is required for efficient glycoprotein expression, post-translational maturation cleavage of G1 and G2, glycoprotein transport to the cell surface plasma membrane, formation of infectious virus particles, and acid pH-dependent glycoprotein-mediated cell fusion. Functionally, forms the virion spikes together with glycoprotein G2. The glycoprotein spike trimers are connected to the underlying matrix. Interacts with the host receptor leading to virus endocytosis. Its function is as follows. Forms the virion spikes together with glycoprotein G1. The glycoprotein spike trimers are connected to the underlying matrix. Class I viral fusion protein that directs fusion of viral and host endosomal membranes, leading to delivery of the nucleocapsid into the cytoplasm. Membrane fusion is mediated by irreversible conformational changes induced by acidification. The sequence is that of Pre-glycoprotein polyprotein GP complex from Sigmodon hispidus (Hispid cotton rat).